Here is a 170-residue protein sequence, read N- to C-terminus: MPLTRDPFQNPALDKDDSYLGKSRASKKLPYKNPTHLAQQQEPWCRLSSTPTITSMKRDGFFFYSEIPKDDLDFRLAALYNHHTGTFKNKSEILTHQETIQDTRRIKTQFPGEFLPAPQPPLITSRANIRHWINPKKESIHSIQGSIVSPHTAATNGGYSRKNDGGFFST.

Disordered regions lie at residues 1–37 (MPLT…PTHL) and 151–170 (HTAA…FFST).

In terms of assembly, microtubule inner protein component of sperm flagellar doublet microtubules. In terms of tissue distribution, expressed in trachea multiciliated cells.

Its subcellular location is the cytoplasm. It is found in the cytoskeleton. It localises to the cilium axoneme. The protein resides in the flagellum axoneme. In terms of biological role, microtubule inner protein (MIP) part of the dynein-decorated doublet microtubules (DMTs) in cilia axoneme, which is required for motile cilia beating. May play an important role for the maintenance of myelin-axon integrity. May affect intracellular Ca(2+) homeostasis. The chain is Cilia- and flagella-associated protein 276 from Bos taurus (Bovine).